The sequence spans 552 residues: Urocanate hydratase (552 aa).

NAD(+) contacts are provided by residues 49-50, Gln-127, 173-175, Asp-193, 239-240, 260-264, 270-271, and Tyr-319; these read GG, GMG, NA, QTSAH, and YV. Cys-407 is an active-site residue. Gly-489 serves as a coordination point for NAD(+).

The protein belongs to the urocanase family. It depends on NAD(+) as a cofactor.

It localises to the cytoplasm. The catalysed reaction is 4-imidazolone-5-propanoate = trans-urocanate + H2O. It participates in amino-acid degradation; L-histidine degradation into L-glutamate; N-formimidoyl-L-glutamate from L-histidine: step 2/3. Catalyzes the conversion of urocanate to 4-imidazolone-5-propionate. The sequence is that of Urocanate hydratase from Bacillus cytotoxicus (strain DSM 22905 / CIP 110041 / 391-98 / NVH 391-98).